Here is a 424-residue protein sequence, read N- to C-terminus: Light-independent protochlorophyllide reductase subunit N (424 aa).

3 residues coordinate [4Fe-4S] cluster: Cys16, Cys41, and Cys102.

The protein belongs to the BchN/ChlN family. As to quaternary structure, protochlorophyllide reductase is composed of three subunits; ChlL, ChlN and ChlB. Forms a heterotetramer of two ChlB and two ChlN subunits. [4Fe-4S] cluster serves as cofactor.

The catalysed reaction is chlorophyllide a + oxidized 2[4Fe-4S]-[ferredoxin] + 2 ADP + 2 phosphate = protochlorophyllide a + reduced 2[4Fe-4S]-[ferredoxin] + 2 ATP + 2 H2O. It functions in the pathway porphyrin-containing compound metabolism; chlorophyll biosynthesis (light-independent). Functionally, component of the dark-operative protochlorophyllide reductase (DPOR) that uses Mg-ATP and reduced ferredoxin to reduce ring D of protochlorophyllide (Pchlide) to form chlorophyllide a (Chlide). This reaction is light-independent. The NB-protein (ChlN-ChlB) is the catalytic component of the complex. The sequence is that of Light-independent protochlorophyllide reductase subunit N from Synechococcus sp. (strain WH7803).